We begin with the raw amino-acid sequence, 86 residues long: Exodeoxyribonuclease 7 small subunit (86 aa).

The tract at residues 1–26 (MQDELFETEKIPPKNTKNTKNAPKKS) is disordered.

Belongs to the XseB family. As to quaternary structure, heterooligomer composed of large and small subunits.

It is found in the cytoplasm. The catalysed reaction is Exonucleolytic cleavage in either 5'- to 3'- or 3'- to 5'-direction to yield nucleoside 5'-phosphates.. Its function is as follows. Bidirectionally degrades single-stranded DNA into large acid-insoluble oligonucleotides, which are then degraded further into small acid-soluble oligonucleotides. The protein is Exodeoxyribonuclease 7 small subunit of Helicobacter pylori (strain ATCC 700392 / 26695) (Campylobacter pylori).